Consider the following 205-residue polypeptide: Dihydrofolate reductase (205 aa).

In terms of domain architecture, DHFR spans 1 to 201 (MLALVVALAS…TSFKMFLYTK (201 aa)). NADP(+) contacts are provided by residues Ala7 and 13–19 (GIGNANA). 29–34 (DMAWFR) is a binding site for substrate. Residue 62–64 (RRT) coordinates NADP(+). A substrate-binding site is contributed by Arg78. Residues 84–86 (SRG) and 118–125 (GGRDVYSL) contribute to the NADP(+) site.

Belongs to the dihydrofolate reductase family.

It catalyses the reaction (6S)-5,6,7,8-tetrahydrofolate + NADP(+) = 7,8-dihydrofolate + NADPH + H(+). It functions in the pathway cofactor biosynthesis; tetrahydrofolate biosynthesis; 5,6,7,8-tetrahydrofolate from 7,8-dihydrofolate: step 1/1. Functionally, key enzyme in folate metabolism. Catalyzes an essential reaction for de novo glycine and purine synthesis, and for DNA precursor synthesis. This Encephalitozoon cuniculi (strain GB-M1) (Microsporidian parasite) protein is Dihydrofolate reductase (DHFR-1).